We begin with the raw amino-acid sequence, 298 residues long: MTPDPGAFNHISVLSHELMAGLMLQEQGLYLDATVGGGGHSALILSQYPQTQVIALDQDIQALEAARAKLHDACDRIQFWQGNFSTYHPGELRFDGIIADLGVSSAQLDRPERGFSFRYDADLDMRMDQSQGLTAADVINTYSERDLADIFYHYGEERFSRRIARKIVSKRPLRTTSDLARVVASSLPAAKGRRRRIHPATRVFQALRIAVNQELQVLEKFIEIAPTWLKPGGRIGIISFHSLEDRIVKIHFRQNSLLQVVTKKPIVASEQEKRENSRSRSAKLRFAERVPLADEAES.

Residues 38–40 (GGH), D57, F84, D100, and Q107 each bind S-adenosyl-L-methionine.

Belongs to the methyltransferase superfamily. RsmH family.

Its subcellular location is the cytoplasm. The catalysed reaction is cytidine(1402) in 16S rRNA + S-adenosyl-L-methionine = N(4)-methylcytidine(1402) in 16S rRNA + S-adenosyl-L-homocysteine + H(+). Specifically methylates the N4 position of cytidine in position 1402 (C1402) of 16S rRNA. This Acaryochloris marina (strain MBIC 11017) protein is Ribosomal RNA small subunit methyltransferase H.